An 83-amino-acid polypeptide reads, in one-letter code: UPF0270 protein CGSHiEE_07180 (83 aa).

This sequence belongs to the UPF0270 family.

The sequence is that of UPF0270 protein CGSHiEE_07180 from Haemophilus influenzae (strain PittEE).